The chain runs to 365 residues: Alanine racemase (365 aa).

Lys32 functions as the Proton acceptor; specific for D-alanine in the catalytic mechanism. An N6-(pyridoxal phosphate)lysine modification is found at Lys32. Residue Arg128 participates in substrate binding. Catalysis depends on Tyr257, which acts as the Proton acceptor; specific for L-alanine. A substrate-binding site is contributed by Met305.

The protein belongs to the alanine racemase family. Pyridoxal 5'-phosphate is required as a cofactor.

The enzyme catalyses L-alanine = D-alanine. It participates in amino-acid biosynthesis; D-alanine biosynthesis; D-alanine from L-alanine: step 1/1. In terms of biological role, catalyzes the interconversion of L-alanine and D-alanine. May also act on other amino acids. In Francisella philomiragia subsp. philomiragia (strain ATCC 25017 / CCUG 19701 / FSC 153 / O#319-036), this protein is Alanine racemase (alr).